Consider the following 215-residue polypeptide: Adenylate kinase (215 aa).

10–15 (GAGKGT) contributes to the ATP binding site. The interval 30–59 (STGDMLRAAVKAGTELGLIAKSVMDSGGLV) is NMP. AMP-binding positions include Thr-31, Arg-36, 57-59 (GLV), 85-88 (GFPR), and Gln-92. Positions 122–159 (GRRVHEASGRVYHTVYNPPKVEGKDDVTGDDLVQRKDD) are LID. Residues Arg-123 and 132 to 133 (VY) each bind ATP. Residues Arg-156 and Arg-167 each coordinate AMP. Gly-201 lines the ATP pocket.

The protein belongs to the adenylate kinase family. As to quaternary structure, monomer.

It localises to the cytoplasm. It catalyses the reaction AMP + ATP = 2 ADP. It functions in the pathway purine metabolism; AMP biosynthesis via salvage pathway; AMP from ADP: step 1/1. In terms of biological role, catalyzes the reversible transfer of the terminal phosphate group between ATP and AMP. Plays an important role in cellular energy homeostasis and in adenine nucleotide metabolism. The protein is Adenylate kinase of Pseudomonas fluorescens (strain SBW25).